Here is a 347-residue protein sequence, read N- to C-terminus: Elongation factor Ts (347 aa).

Residues 80 to 83 (TDFV) form an involved in Mg(2+) ion dislocation from EF-Tu region.

This sequence belongs to the EF-Ts family.

The protein resides in the cytoplasm. Associates with the EF-Tu.GDP complex and induces the exchange of GDP to GTP. It remains bound to the aminoacyl-tRNA.EF-Tu.GTP complex up to the GTP hydrolysis stage on the ribosome. The chain is Elongation factor Ts from Streptococcus sanguinis (strain SK36).